The primary structure comprises 443 residues: 2-hydroxyethylphosphonate dioxygenase (443 aa).

The region spanning 8–63 is the HTH cro/C1-type 1 domain; that stretch reads LAHWMNARKYTAAQTADLAGLPLDDLRRLLGDEANEPDPAAATALAEALSVEPSQL. K16 is a binding site for substrate. The segment at residues 19-38 is a DNA-binding region (H-T-H motif); sequence AAQTADLAGLPLDDLRRLLG. Substrate-binding residues include Y98 and N126. Position 129 (H129) interacts with Fe cation. Substrate contacts are provided by E176, H182, and S196. H182 is a Fe cation binding site. The region spanning 234–290 is the HTH cro/C1-type 2 domain; it reads VLDLFLARRAHTRTSAAEAAGVPPADLEAALRSPASETGLTVLRTLGRALGFDYRVL. The H-T-H motif DNA-binding region spans 245–265; the sequence is TRTSAAEAAGVPPADLEAALR.

The protein belongs to the non-heme iron-dependent dioxygenase family. In terms of assembly, homodimer. Fe(2+) is required as a cofactor.

It catalyses the reaction 2-hydroxyethylphosphonate + O2 = hydroxymethylphosphonate + formate + H(+). The protein operates within secondary metabolite biosynthesis; bialaphos biosynthesis. In terms of biological role, non-heme-dependent dioxygenase that catalyzes the conversion of 2-hydroxyethylphosphonate (HEP) to hydroxymethylphosphonate (HMP) in the biosynthesis of phosphinothricin tripeptide (PTT), also known as bialaphos (BA), a natural-product antibiotic and potent herbicide. PTT contains the unusual amino acid phosphinothricin attached to 2 alanine residues. Synthetic phosphinothricin (glufosinate) is a key component of commercial herbicides. The polypeptide is 2-hydroxyethylphosphonate dioxygenase (hepD) (Streptomyces viridochromogenes (strain DSM 40736 / JCM 4977 / BCRC 1201 / Tue 494)).